The primary structure comprises 432 residues: Adenylosuccinate synthetase 2 (432 aa).

Residues 12-18 (GDEGKGR) and 40-42 (GHT) contribute to the GTP site. Asp-13 serves as the catalytic Proton acceptor. Mg(2+) contacts are provided by Asp-13 and Gly-40. IMP-binding positions include 13–16 (DEGK), 38–41 (NAGH), Thr-128, Arg-142, Gln-222, Thr-237, and Arg-301. His-41 (proton donor) is an active-site residue. Substrate is bound at residue 297–303 (VNTGRPR). GTP-binding positions include Arg-303, 329–331 (KLD), and 411–413 (TTG).

It belongs to the adenylosuccinate synthetase family. Homodimer. Mg(2+) is required as a cofactor.

Its subcellular location is the cytoplasm. It catalyses the reaction IMP + L-aspartate + GTP = N(6)-(1,2-dicarboxyethyl)-AMP + GDP + phosphate + 2 H(+). Its pathway is purine metabolism; AMP biosynthesis via de novo pathway; AMP from IMP: step 1/2. Functionally, plays an important role in the de novo pathway of purine nucleotide biosynthesis. Catalyzes the first committed step in the biosynthesis of AMP from IMP. This is Adenylosuccinate synthetase 2 from Burkholderia lata (strain ATCC 17760 / DSM 23089 / LMG 22485 / NCIMB 9086 / R18194 / 383).